The primary structure comprises 542 residues: CTP synthase (542 aa).

Positions 1 to 265 are amidoligase domain; sequence MPRYIFITGG…DTEILRCFGI (265 aa). Position 13 (serine 13) interacts with CTP. Residue serine 13 participates in UTP binding. 14 to 19 is an ATP binding site; it reads SLGKGL. Tyrosine 54 is an L-glutamine binding site. ATP is bound at residue aspartate 71. Positions 71 and 139 each coordinate Mg(2+). CTP is bound by residues 146 to 148, 186 to 191, and lysine 222; these read DIE and KTKPTQ. UTP is bound by residues 186 to 191 and lysine 222; that span reads KTKPTQ. ATP is bound at residue 238-240; that stretch reads RDA. Residues 298-541 enclose the Glutamine amidotransferase type-1 domain; sequence YVGLLDAYKS…IAAALHQSRM (244 aa). Glycine 353 provides a ligand contact to L-glutamine. The active-site Nucleophile; for glutamine hydrolysis is cysteine 380. L-glutamine contacts are provided by residues 381–384, glutamate 404, and arginine 469; that span reads YGMQ. Residues histidine 514 and glutamate 516 contribute to the active site.

This sequence belongs to the CTP synthase family. Homotetramer.

The enzyme catalyses UTP + L-glutamine + ATP + H2O = CTP + L-glutamate + ADP + phosphate + 2 H(+). It carries out the reaction L-glutamine + H2O = L-glutamate + NH4(+). It catalyses the reaction UTP + NH4(+) + ATP = CTP + ADP + phosphate + 2 H(+). The protein operates within pyrimidine metabolism; CTP biosynthesis via de novo pathway; CTP from UDP: step 2/2. Its activity is regulated as follows. Allosterically activated by GTP, when glutamine is the substrate; GTP has no effect on the reaction when ammonia is the substrate. The allosteric effector GTP functions by stabilizing the protein conformation that binds the tetrahedral intermediate(s) formed during glutamine hydrolysis. Inhibited by the product CTP, via allosteric rather than competitive inhibition. Its function is as follows. Catalyzes the ATP-dependent amination of UTP to CTP with either L-glutamine or ammonia as the source of nitrogen. Regulates intracellular CTP levels through interactions with the four ribonucleotide triphosphates. The protein is CTP synthase of Maricaulis maris (strain MCS10) (Caulobacter maris).